Here is a 92-residue protein sequence, read N- to C-terminus: Large ribosomal subunit protein bL28 (92 aa).

A disordered region spans residues 1-34 (MGRECEITGKKTMFGNNVPRKGLSRKKGGGGQHI).

It belongs to the bacterial ribosomal protein bL28 family.

The chain is Large ribosomal subunit protein bL28 from Borrelia turicatae (strain 91E135).